The primary structure comprises 154 residues: SsrA-binding protein (154 aa).

The tract at residues 130-154 is disordered; that stretch reads KLHDKRETERRRQDQRDIQRAIKRA. The span at 133–154 shows a compositional bias: basic and acidic residues; it reads DKRETERRRQDQRDIQRAIKRA.

This sequence belongs to the SmpB family.

It is found in the cytoplasm. In terms of biological role, required for rescue of stalled ribosomes mediated by trans-translation. Binds to transfer-messenger RNA (tmRNA), required for stable association of tmRNA with ribosomes. tmRNA and SmpB together mimic tRNA shape, replacing the anticodon stem-loop with SmpB. tmRNA is encoded by the ssrA gene; the 2 termini fold to resemble tRNA(Ala) and it encodes a 'tag peptide', a short internal open reading frame. During trans-translation Ala-aminoacylated tmRNA acts like a tRNA, entering the A-site of stalled ribosomes, displacing the stalled mRNA. The ribosome then switches to translate the ORF on the tmRNA; the nascent peptide is terminated with the 'tag peptide' encoded by the tmRNA and targeted for degradation. The ribosome is freed to recommence translation, which seems to be the essential function of trans-translation. In Synechococcus elongatus (strain ATCC 33912 / PCC 7942 / FACHB-805) (Anacystis nidulans R2), this protein is SsrA-binding protein.